Here is a 490-residue protein sequence, read N- to C-terminus: MSQSVSERTRIKSDRYESGVIPYAKMGYWDASYAVKTTDVLALFRITPQPGVDPVEAAAAVAGESSTATWTVVWTDLLTACDRYRAKAYRVDPVPNAADQYFAFIAYECDLFEEGSLANLTASIIGNVFGFKAVAALRLEDMRIPHSYLKTFQGPATGIVVERERLNKYGTPLLGATVKPKLGLSGKNYGRVVYEGLKGGLDFLKDDENINSQPFMRWRERFLNCMEGINRASAATGEVKGSYLNVTAATMEEVYKRSEYAKEVGSIIIMIDLVMGYTAIQSMALWARENDMLLHLHRAGNSTYARQKNHGINFRVICKWMRMSGVDHIHAGTVVGKLEGDPLMIKGFYHTLRLTTLDVNLPYGLFFEMSWASLRRCMPVASGGIHCGQMHQLIHYLGDDVVLQFGGGTIGHPDGIQAGATANRVALESMVLARNEGADYFNQEVGPQILRNAAKTCGPLQSALDLWKDISFNYTSTDTADFAATSTANV.

2 residues coordinate substrate: Asn127 and Thr177. Lys179 functions as the Proton acceptor in the catalytic mechanism. Lys181 provides a ligand contact to substrate. Mg(2+) contacts are provided by Lys205, Asp207, and Glu208. Lys205 bears the N6-carboxylysine mark. The active-site Proton acceptor is His297. Substrate contacts are provided by Arg298, His330, and Ser382.

This sequence belongs to the RuBisCO large chain family. Type I subfamily. Heterohexadecamer of 8 large chains and 8 small chains. Mg(2+) is required as a cofactor.

It localises to the plastid. The protein localises to the chloroplast. The catalysed reaction is 2 (2R)-3-phosphoglycerate + 2 H(+) = D-ribulose 1,5-bisphosphate + CO2 + H2O. It catalyses the reaction D-ribulose 1,5-bisphosphate + O2 = 2-phosphoglycolate + (2R)-3-phosphoglycerate + 2 H(+). Its function is as follows. RuBisCO catalyzes two reactions: the carboxylation of D-ribulose 1,5-bisphosphate, the primary event in carbon dioxide fixation, as well as the oxidative fragmentation of the pentose substrate in the photorespiration process. Both reactions occur simultaneously and in competition at the same active site. The sequence is that of Ribulose bisphosphate carboxylase large chain from Cylindrotheca sp. (strain N1) (Marine diatom).